We begin with the raw amino-acid sequence, 138 residues long: ATP synthase epsilon chain (138 aa).

Belongs to the ATPase epsilon chain family. As to quaternary structure, F-type ATPases have 2 components, CF(1) - the catalytic core - and CF(0) - the membrane proton channel. CF(1) has five subunits: alpha(3), beta(3), gamma(1), delta(1), epsilon(1). CF(0) has three main subunits: a, b and c.

Its subcellular location is the cell inner membrane. Produces ATP from ADP in the presence of a proton gradient across the membrane. The sequence is that of ATP synthase epsilon chain from Polaromonas sp. (strain JS666 / ATCC BAA-500).